The following is a 529-amino-acid chain: ATP synthase F(1) complex subunit beta, mitochondrial (529 aa).

The transit peptide at 1 to 47 (MLGFVGRVAAAPASGALRRLTPSASLPPAQLLLRAAPTAVHPVRDYA) directs the protein to the mitochondrion. O-linked (GlcNAc) serine glycosylation is present at Ser-106. Lys-124, Lys-133, and Lys-161 each carry N6-acetyllysine; alternate. N6-succinyllysine; alternate occurs at positions 124, 133, and 161. Lys-198 is subject to N6-acetyllysine. ADP is bound by residues Gly-209, Val-210, Gly-211, Lys-212, Thr-213, and Val-214. Gly-209 contacts ATP. Residues Gly-209, Val-210, Gly-211, Lys-212, and Thr-213 each coordinate phosphate. ATP is bound by residues Gly-211, Lys-212, Thr-213, and Val-214. Thr-213 contributes to the Mg(2+) binding site. Residue Glu-238 participates in Mg(2+) binding. Residue Arg-239 participates in ATP binding. N6-acetyllysine; alternate occurs at positions 259 and 264. N6-succinyllysine; alternate is present on residues Lys-259 and Lys-264. Phosphothreonine is present on Thr-312. Ser-415 bears the Phosphoserine mark. Lys-426 carries the post-translational modification N6-acetyllysine. A Phosphoserine modification is found at Ser-433. Lys-480 and Lys-485 each carry N6-acetyllysine. Lys-522 bears the N6-acetyllysine; alternate mark. N6-succinyllysine; alternate is present on Lys-522. Ser-529 bears the Phosphoserine mark.

Belongs to the ATPase alpha/beta chains family. Homotrimer. Component of the ATP synthase complex composed at least of ATP5F1A/subunit alpha, ATP5F1B/subunit beta, ATP5MC1/subunit c (homooctomer), MT-ATP6/subunit a, MT-ATP8/subunit 8, ATP5ME/subunit e, ATP5MF/subunit f, ATP5MG/subunit g, ATP5MK/subunit k, ATP5MJ/subunit j, ATP5F1C/subunit gamma, ATP5F1D/subunit delta, ATP5F1E/subunit epsilon, ATP5PF/subunit F6, ATP5PB/subunit b, ATP5PD/subunit d, ATP5PO/subunit OSCP. ATP synthase complex consists of a soluble F(1) head domain (subunits alpha(3) and beta(3)) - the catalytic core - and a membrane F(0) domain - the membrane proton channel (subunits c, a, 8, e, f, g, k and j). These two domains are linked by a central stalk (subunits gamma, delta, and epsilon) rotating inside the F1 region and a stationary peripheral stalk (subunits F6, b, d, and OSCP). Interacts with PPIF. Interacts with BCL2L1 isoform BCL-X(L); the interaction mediates the association of BCL2L1 isoform BCL-X(L) with the mitochondrial membrane F(1)F(0) ATP synthase and enhances neurons metabolic efficiency. Interacts with CLN5 and PPT1. Interacts with S100A1; this interaction increases F1-ATPase activity. Interacts with MTLN. Interacts with TTC5/STRAP; the interaction results in decreased mitochondrial ATP production. Mg(2+) serves as cofactor.

Its subcellular location is the mitochondrion inner membrane. It carries out the reaction ATP + H2O + 4 H(+)(in) = ADP + phosphate + 5 H(+)(out). In terms of biological role, catalytic subunit beta, of the mitochondrial membrane ATP synthase complex (F(1)F(0) ATP synthase or Complex V) that produces ATP from ADP in the presence of a proton gradient across the membrane which is generated by electron transport complexes of the respiratory chain. ATP synthase complex consist of a soluble F(1) head domain - the catalytic core - and a membrane F(1) domain - the membrane proton channel. These two domains are linked by a central stalk rotating inside the F(1) region and a stationary peripheral stalk. During catalysis, ATP synthesis in the catalytic domain of F(1) is coupled via a rotary mechanism of the central stalk subunits to proton translocation. In vivo, can only synthesize ATP although its ATP hydrolase activity can be activated artificially in vitro. With the subunit alpha (ATP5F1A), forms the catalytic core in the F(1) domain. In Homo sapiens (Human), this protein is ATP synthase F(1) complex subunit beta, mitochondrial.